We begin with the raw amino-acid sequence, 136 residues long: 6,7-dimethyl-8-ribityllumazine synthase (136 aa).

Residues Phe11, 43–45 (VYD), and 67–69 (CVI) each bind 5-amino-6-(D-ribitylamino)uracil. Residue 72-73 (DT) coordinates (2S)-2-hydroxy-3-oxobutyl phosphate. His75 acts as the Proton donor in catalysis. Leu100 serves as a coordination point for 5-amino-6-(D-ribitylamino)uracil. Residue Arg115 coordinates (2S)-2-hydroxy-3-oxobutyl phosphate.

This sequence belongs to the DMRL synthase family. As to quaternary structure, forms an icosahedral capsid composed of 60 subunits, arranged as a dodecamer of pentamers.

The catalysed reaction is (2S)-2-hydroxy-3-oxobutyl phosphate + 5-amino-6-(D-ribitylamino)uracil = 6,7-dimethyl-8-(1-D-ribityl)lumazine + phosphate + 2 H2O + H(+). Its pathway is cofactor biosynthesis; riboflavin biosynthesis; riboflavin from 2-hydroxy-3-oxobutyl phosphate and 5-amino-6-(D-ribitylamino)uracil: step 1/2. In terms of biological role, catalyzes the formation of 6,7-dimethyl-8-ribityllumazine by condensation of 5-amino-6-(D-ribitylamino)uracil with 3,4-dihydroxy-2-butanone 4-phosphate. This is the penultimate step in the biosynthesis of riboflavin. This chain is 6,7-dimethyl-8-ribityllumazine synthase, found in Methanococcus aeolicus (strain ATCC BAA-1280 / DSM 17508 / OCM 812 / Nankai-3).